The chain runs to 174 residues: Ribosome maturation factor RimM (174 aa).

The PRC barrel domain occupies 97–171 (EGYYYDFDII…RMVIDPIPGL (75 aa)).

It belongs to the RimM family. Binds ribosomal protein uS19.

It is found in the cytoplasm. Functionally, an accessory protein needed during the final step in the assembly of 30S ribosomal subunit, possibly for assembly of the head region. Essential for efficient processing of 16S rRNA. May be needed both before and after RbfA during the maturation of 16S rRNA. It has affinity for free ribosomal 30S subunits but not for 70S ribosomes. The protein is Ribosome maturation factor RimM of Symbiobacterium thermophilum (strain DSM 24528 / JCM 14929 / IAM 14863 / T).